Consider the following 337-residue polypeptide: Heat-inducible transcription repressor HrcA (337 aa).

The protein belongs to the HrcA family.

In terms of biological role, negative regulator of class I heat shock genes (grpE-dnaK-dnaJ and groELS operons). Prevents heat-shock induction of these operons. The chain is Heat-inducible transcription repressor HrcA from Polaromonas naphthalenivorans (strain CJ2).